Here is a 560-residue protein sequence, read N- to C-terminus: Poly(3-hydroxyalkanoate) polymerase 2 (560 aa).

The active site involves Cys296.

It belongs to the PHA/PHB synthase family. Type II PhaC subfamily.

The protein operates within biopolymer metabolism; poly-(R)-3-hydroxybutanoate biosynthesis. Its function is as follows. Synthesizes poly(3-hydroxyalkanoates) (PHA), complements a mutant of P.putida that does not make PHA. In Ectopseudomonas oleovorans (Pseudomonas oleovorans), this protein is Poly(3-hydroxyalkanoate) polymerase 2.